The following is a 663-amino-acid chain: Bicarbonate transport ATP-binding protein CmpC (663 aa).

In terms of domain architecture, ABC transporter spans 5 to 239 (VAVENIEKSF…RPRKRMDVVH (235 aa)). Residue 42–49 (GHSGCGKS) participates in ATP binding. The interval 281–663 (LEIGYVPLMA…LDQPRPIAAA (383 aa)) is cmpA-like.

It belongs to the ABC transporter superfamily. Nitrate/nitrite/cyanate uptake transporter (NitT) (TC 3.A.1.16) family. As to quaternary structure, the complex is composed of two ATP-binding proteins (CmpC and CmpD), a transmembrane protein (CmpB) and a solute-binding protein (CmpA).

It is found in the cell inner membrane. Part of the ABC transporter complex CmpABCD involved in bicarbonate transport. Responsible for energy coupling to the transport system. The polypeptide is Bicarbonate transport ATP-binding protein CmpC (cmpC) (Synechococcus elongatus (strain ATCC 33912 / PCC 7942 / FACHB-805) (Anacystis nidulans R2)).